Reading from the N-terminus, the 290-residue chain is uncharacterized protein (290 aa).

Positions 161 to 216 (SNQREVESLEQLVHEQLNKLNTESKMEFENRKNDTKNEVQQLSARIVELHNLLAVS) form a coiled coil. Residues 236 to 256 (AGVVMAFTGFLVLVIPFGLGV) traverse the membrane as a helical segment.

It is found in the mitochondrion membrane. This is an uncharacterized protein from Schizosaccharomyces pombe (strain 972 / ATCC 24843) (Fission yeast).